Reading from the N-terminus, the 87-residue chain is MANIKSQIKRIGTNKKAQERNKAVKSELKTAIRSVKTAISAGDKDAAVKAVSLAGKKLDKAASKGVIHKNQAANRKGAIAKQVAKIG.

The tract at residues 1–22 (MANIKSQIKRIGTNKKAQERNK) is disordered.

The protein belongs to the bacterial ribosomal protein bS20 family.

Binds directly to 16S ribosomal RNA. The sequence is that of Small ribosomal subunit protein bS20 from Clavibacter sepedonicus (Clavibacter michiganensis subsp. sepedonicus).